A 93-amino-acid chain; its full sequence is MLRLDLQFFASKKGVGSTKNGRDSEAKRLGAKRADGQFVSGGSILYRQRGTKIYPGENVGRGGDDTLYAKVDGTVKFERFGRNRKKVSVYPVA.

A propeptide spanning residues 1 to 9 is cleaved from the precursor; the sequence is MLRLDLQFF.

The protein belongs to the bacterial ribosomal protein bL27 family. Post-translationally, the N-terminus is cleaved by ribosomal processing cysteine protease Prp.

In Bacillus licheniformis (strain ATCC 14580 / DSM 13 / JCM 2505 / CCUG 7422 / NBRC 12200 / NCIMB 9375 / NCTC 10341 / NRRL NRS-1264 / Gibson 46), this protein is Large ribosomal subunit protein bL27.